The chain runs to 968 residues: RNA polymerase-associated protein RapA (968 aa).

In terms of domain architecture, Helicase ATP-binding spans D164–N334. D177–T184 provides a ligand contact to ATP. The short motif at D280–H283 is the DEAH box element. In terms of domain architecture, Helicase C-terminal spans R490–D644.

The protein belongs to the SNF2/RAD54 helicase family. RapA subfamily. Interacts with the RNAP. Has a higher affinity for the core RNAP than for the holoenzyme. Its ATPase activity is stimulated by binding to RNAP.

In terms of biological role, transcription regulator that activates transcription by stimulating RNA polymerase (RNAP) recycling in case of stress conditions such as supercoiled DNA or high salt concentrations. Probably acts by releasing the RNAP, when it is trapped or immobilized on tightly supercoiled DNA. Does not activate transcription on linear DNA. Probably not involved in DNA repair. The protein is RNA polymerase-associated protein RapA of Klebsiella pneumoniae (strain 342).